Reading from the N-terminus, the 694-residue chain is DNA-directed RNA polymerase subunit beta' (694 aa).

The Zn(2+) site is built by C69, C71, C87, and C90. Mg(2+)-binding residues include D489, D491, and D493.

Belongs to the RNA polymerase beta' chain family. RpoC1 subfamily. In plastids the minimal PEP RNA polymerase catalytic core is composed of four subunits: alpha, beta, beta', and beta''. When a (nuclear-encoded) sigma factor is associated with the core the holoenzyme is formed, which can initiate transcription. Requires Mg(2+) as cofactor. Zn(2+) is required as a cofactor.

It localises to the plastid. It is found in the chloroplast. The catalysed reaction is RNA(n) + a ribonucleoside 5'-triphosphate = RNA(n+1) + diphosphate. Functionally, DNA-dependent RNA polymerase catalyzes the transcription of DNA into RNA using the four ribonucleoside triphosphates as substrates. This chain is DNA-directed RNA polymerase subunit beta', found in Gossypium barbadense (Sea Island cotton).